A 401-amino-acid chain; its full sequence is Formate-dependent phosphoribosylglycinamide formyltransferase (401 aa).

N(1)-(5-phospho-beta-D-ribosyl)glycinamide-binding positions include 22-23 (EL) and Glu82. ATP contacts are provided by residues Arg115, Lys157, 162–167 (SSGKGQ), 197–200 (EGFV), and Glu205. The ATP-grasp domain occupies 120-315 (RLAAETLALP…EFELHARAIL (196 aa)). 2 residues coordinate Mg(2+): Glu274 and Glu286. N(1)-(5-phospho-beta-D-ribosyl)glycinamide contacts are provided by residues Asp293, Lys362, and 369–370 (RR).

The protein belongs to the PurK/PurT family. In terms of assembly, homodimer.

The catalysed reaction is N(1)-(5-phospho-beta-D-ribosyl)glycinamide + formate + ATP = N(2)-formyl-N(1)-(5-phospho-beta-D-ribosyl)glycinamide + ADP + phosphate + H(+). It functions in the pathway purine metabolism; IMP biosynthesis via de novo pathway; N(2)-formyl-N(1)-(5-phospho-D-ribosyl)glycinamide from N(1)-(5-phospho-D-ribosyl)glycinamide (formate route): step 1/1. Its function is as follows. Involved in the de novo purine biosynthesis. Catalyzes the transfer of formate to 5-phospho-ribosyl-glycinamide (GAR), producing 5-phospho-ribosyl-N-formylglycinamide (FGAR). Formate is provided by PurU via hydrolysis of 10-formyl-tetrahydrofolate. This chain is Formate-dependent phosphoribosylglycinamide formyltransferase, found in Polaromonas naphthalenivorans (strain CJ2).